Consider the following 251-residue polypeptide: Small ribosomal subunit protein uS3 (251 aa).

Residues 22 to 93 (LNEFFTRELA…GIAIYAERVE (72 aa)) enclose the KH type-2 domain. The tract at residues 223 to 251 (TVKSYKQTAEDETETDAPVEAEAEVEATA) is disordered. Acidic residues predominate over residues 232 to 251 (EDETETDAPVEAEAEVEATA).

The protein belongs to the universal ribosomal protein uS3 family. In terms of assembly, component of the small ribosomal subunit. Mature ribosomes consist of a small (40S) and a large (60S) subunit. The 40S subunit contains about 32 different proteins and 1 molecule of RNA (18S). The 60S subunit contains 45 different proteins and 3 molecules of RNA (25S, 5.8S and 5S).

Its subcellular location is the cytoplasm. Component of the ribosome, a large ribonucleoprotein complex responsible for the synthesis of proteins in the cell. The small ribosomal subunit (SSU) binds messenger RNAs (mRNAs) and translates the encoded message by selecting cognate aminoacyl-transfer RNA (tRNA) molecules. The large subunit (LSU) contains the ribosomal catalytic site termed the peptidyl transferase center (PTC), which catalyzes the formation of peptide bonds, thereby polymerizing the amino acids delivered by tRNAs into a polypeptide chain. The nascent polypeptides leave the ribosome through a tunnel in the LSU and interact with protein factors that function in enzymatic processing, targeting, and the membrane insertion of nascent chains at the exit of the ribosomal tunnel. In Candida albicans (strain SC5314 / ATCC MYA-2876) (Yeast), this protein is Small ribosomal subunit protein uS3 (RPS3).